A 60-amino-acid chain; its full sequence is Large ribosomal subunit protein bL32 (60 aa).

This sequence belongs to the bacterial ribosomal protein bL32 family.

The sequence is that of Large ribosomal subunit protein bL32 from Paramagnetospirillum magneticum (strain ATCC 700264 / AMB-1) (Magnetospirillum magneticum).